Reading from the N-terminus, the 453-residue chain is Probable glycine dehydrogenase (decarboxylating) subunit 1 (453 aa).

This sequence belongs to the GcvP family. N-terminal subunit subfamily. As to quaternary structure, the glycine cleavage system is composed of four proteins: P, T, L and H. In this organism, the P 'protein' is a heterodimer of two subunits.

The catalysed reaction is N(6)-[(R)-lipoyl]-L-lysyl-[glycine-cleavage complex H protein] + glycine + H(+) = N(6)-[(R)-S(8)-aminomethyldihydrolipoyl]-L-lysyl-[glycine-cleavage complex H protein] + CO2. The glycine cleavage system catalyzes the degradation of glycine. The P protein binds the alpha-amino group of glycine through its pyridoxal phosphate cofactor; CO(2) is released and the remaining methylamine moiety is then transferred to the lipoamide cofactor of the H protein. This Dictyoglomus turgidum (strain DSM 6724 / Z-1310) protein is Probable glycine dehydrogenase (decarboxylating) subunit 1.